The following is a 326-amino-acid chain: Beta-ketoacyl-[acyl-carrier-protein] synthase III (326 aa).

Residues Cys120 and His253 contribute to the active site. The segment at 254–258 (QANIR) is ACP-binding. The active site involves Asn283.

This sequence belongs to the thiolase-like superfamily. FabH family. Homodimer.

It localises to the cytoplasm. It carries out the reaction malonyl-[ACP] + acetyl-CoA + H(+) = 3-oxobutanoyl-[ACP] + CO2 + CoA. It participates in lipid metabolism; fatty acid biosynthesis. In terms of biological role, catalyzes the condensation reaction of fatty acid synthesis by the addition to an acyl acceptor of two carbons from malonyl-ACP. Catalyzes the first condensation reaction which initiates fatty acid synthesis and may therefore play a role in governing the total rate of fatty acid production. Possesses both acetoacetyl-ACP synthase and acetyl transacylase activities. Its substrate specificity determines the biosynthesis of branched-chain and/or straight-chain of fatty acids. This is Beta-ketoacyl-[acyl-carrier-protein] synthase III from Cupriavidus taiwanensis (strain DSM 17343 / BCRC 17206 / CCUG 44338 / CIP 107171 / LMG 19424 / R1) (Ralstonia taiwanensis (strain LMG 19424)).